Reading from the N-terminus, the 227-residue chain is 7-cyano-7-deazaguanine synthase (227 aa).

Leu10–Thr20 contacts ATP. Zn(2+) contacts are provided by Cys193, Cys201, Cys204, and Cys207.

The protein belongs to the QueC family. The cofactor is Zn(2+).

It carries out the reaction 7-carboxy-7-deazaguanine + NH4(+) + ATP = 7-cyano-7-deazaguanine + ADP + phosphate + H2O + H(+). Its pathway is purine metabolism; 7-cyano-7-deazaguanine biosynthesis. Catalyzes the ATP-dependent conversion of 7-carboxy-7-deazaguanine (CDG) to 7-cyano-7-deazaguanine (preQ(0)). This Methanobrevibacter smithii (strain ATCC 35061 / DSM 861 / OCM 144 / PS) protein is 7-cyano-7-deazaguanine synthase.